Reading from the N-terminus, the 368-residue chain is 3-dehydroquinate synthase (368 aa).

Residues 112-116 (GVIGD), 136-137 (TT), lysine 149, lysine 158, and 176-179 (TLIT) contribute to the NAD(+) site. Positions 191, 256, and 273 each coordinate Zn(2+).

This sequence belongs to the sugar phosphate cyclases superfamily. Dehydroquinate synthase family. The cofactor is Co(2+). It depends on Zn(2+) as a cofactor. NAD(+) is required as a cofactor.

It localises to the cytoplasm. The enzyme catalyses 7-phospho-2-dehydro-3-deoxy-D-arabino-heptonate = 3-dehydroquinate + phosphate. It functions in the pathway metabolic intermediate biosynthesis; chorismate biosynthesis; chorismate from D-erythrose 4-phosphate and phosphoenolpyruvate: step 2/7. Catalyzes the conversion of 3-deoxy-D-arabino-heptulosonate 7-phosphate (DAHP) to dehydroquinate (DHQ). This chain is 3-dehydroquinate synthase, found in Prochlorococcus marinus (strain NATL2A).